Here is an 81-residue protein sequence, read N- to C-terminus: ATP synthase subunit c, chloroplastic (81 aa).

2 helical membrane passes run 3–23 and 57–77; these read PLIS…ASIG and LAFM…LLFA.

Belongs to the ATPase C chain family. As to quaternary structure, F-type ATPases have 2 components, F(1) - the catalytic core - and F(0) - the membrane proton channel. F(1) has five subunits: alpha(3), beta(3), gamma(1), delta(1), epsilon(1). F(0) has four main subunits: a(1), b(1), b'(1) and c(10-14). The alpha and beta chains form an alternating ring which encloses part of the gamma chain. F(1) is attached to F(0) by a central stalk formed by the gamma and epsilon chains, while a peripheral stalk is formed by the delta, b and b' chains.

It localises to the plastid. The protein localises to the chloroplast thylakoid membrane. In terms of biological role, f(1)F(0) ATP synthase produces ATP from ADP in the presence of a proton or sodium gradient. F-type ATPases consist of two structural domains, F(1) containing the extramembraneous catalytic core and F(0) containing the membrane proton channel, linked together by a central stalk and a peripheral stalk. During catalysis, ATP synthesis in the catalytic domain of F(1) is coupled via a rotary mechanism of the central stalk subunits to proton translocation. Key component of the F(0) channel; it plays a direct role in translocation across the membrane. A homomeric c-ring of between 10-14 subunits forms the central stalk rotor element with the F(1) delta and epsilon subunits. The protein is ATP synthase subunit c, chloroplastic of Gossypium barbadense (Sea Island cotton).